Reading from the N-terminus, the 563-residue chain is Phospholipase B-like protein F (563 aa).

The first 21 residues, 1–21 (MKIINSFVFIFVLLFVFNTNA), serve as a signal peptide directing secretion. N-linked (GlcNAc...) asparagine glycans are attached at residues asparagine 85, asparagine 107, asparagine 118, asparagine 121, asparagine 208, asparagine 312, and asparagine 537.

The protein belongs to the phospholipase B-like family.

Its subcellular location is the secreted. Its function is as follows. Probable phospholipase. In Dictyostelium discoideum (Social amoeba), this protein is Phospholipase B-like protein F (plbF).